The following is a 518-amino-acid chain: Probable cyclic di-GMP phosphodiesterase PdeN (518 aa).

2 helical membrane passes run 16–36 (CIVA…LVAW) and 236–256 (VWYA…LCYY). The EAL domain occupies 261 to 514 (RMRPGREIMT…DFVRWLKKPY (254 aa)).

It localises to the cell inner membrane. The catalysed reaction is 3',3'-c-di-GMP + H2O = 5'-phosphoguanylyl(3'-&gt;5')guanosine + H(+). In terms of biological role, phosphodiesterase (PDE) that catalyzes the hydrolysis of cyclic-di-GMP (c-di-GMP) to 5'-pGpG. The sequence is that of Probable cyclic di-GMP phosphodiesterase PdeN from Escherichia coli (strain K12).